A 174-amino-acid chain; its full sequence is ATP-dependent protease subunit HslV (174 aa).

Residue Thr2 is part of the active site. Residues Gly157, Cys160, and Thr163 each coordinate Na(+).

Belongs to the peptidase T1B family. HslV subfamily. As to quaternary structure, a double ring-shaped homohexamer of HslV is capped on each side by a ring-shaped HslU homohexamer. The assembly of the HslU/HslV complex is dependent on binding of ATP.

Its subcellular location is the cytoplasm. It catalyses the reaction ATP-dependent cleavage of peptide bonds with broad specificity.. With respect to regulation, allosterically activated by HslU binding. Its function is as follows. Protease subunit of a proteasome-like degradation complex believed to be a general protein degrading machinery. This chain is ATP-dependent protease subunit HslV, found in Yersinia pseudotuberculosis serotype I (strain IP32953).